A 317-amino-acid polypeptide reads, in one-letter code: Pseudouridine-5'-phosphate glycosidase (317 aa).

The active-site Proton donor is the glutamate 27. Positions 89 and 109 each coordinate substrate. Mn(2+) is bound at residue aspartate 141. A substrate-binding site is contributed by 143-145; sequence SAD. Lysine 162 (nucleophile) is an active-site residue.

It belongs to the pseudouridine-5'-phosphate glycosidase family. As to quaternary structure, homotrimer. Requires Mn(2+) as cofactor.

It carries out the reaction D-ribose 5-phosphate + uracil = psi-UMP + H2O. Its function is as follows. Catalyzes the reversible cleavage of pseudouridine 5'-phosphate (PsiMP) to ribose 5-phosphate and uracil. Functions biologically in the cleavage direction, as part of a pseudouridine degradation pathway. The chain is Pseudouridine-5'-phosphate glycosidase from Sorangium cellulosum (strain So ce56) (Polyangium cellulosum (strain So ce56)).